A 289-amino-acid chain; its full sequence is Purine nucleoside phosphorylase (289 aa).

Met1 carries the N-acetylmethionine modification. Phosphate contacts are provided by residues Ser33, His64, and 84–86; that span reads RFH. Tyr88 contributes to the a purine D-ribonucleoside binding site. Ala116 is a binding site for phosphate. A purine D-ribonucleoside-binding residues include Glu201 and Met219. Residue Ser220 participates in phosphate binding. Positions 243 and 257 each coordinate a purine D-ribonucleoside.

The protein belongs to the PNP/MTAP phosphorylase family. As to quaternary structure, homotrimer.

It localises to the cytoplasm. The catalysed reaction is inosine + phosphate = alpha-D-ribose 1-phosphate + hypoxanthine. It carries out the reaction guanosine + phosphate = alpha-D-ribose 1-phosphate + guanine. The enzyme catalyses 2'-deoxyguanosine + phosphate = 2-deoxy-alpha-D-ribose 1-phosphate + guanine. It catalyses the reaction 2'-deoxyinosine + phosphate = 2-deoxy-alpha-D-ribose 1-phosphate + hypoxanthine. It participates in purine metabolism; purine nucleoside salvage. Its function is as follows. Catalyzes the phosphorolytic breakdown of the N-glycosidic bond in the beta-(deoxy)ribonucleoside molecules, with the formation of the corresponding free purine bases and pentose-1-phosphate. Preferentially acts on 6-oxopurine nucleosides including inosine and guanosine. This chain is Purine nucleoside phosphorylase (Pnp), found in Mus musculus (Mouse).